Reading from the N-terminus, the 131-residue chain is Aspartate 1-decarboxylase (131 aa).

Serine 25 (schiff-base intermediate with substrate; via pyruvic acid) is an active-site residue. Serine 25 is modified (pyruvic acid (Ser)). Substrate is bound at residue threonine 57. The active-site Proton donor is the tyrosine 58. A substrate-binding site is contributed by 73–75 (GAA).

It belongs to the PanD family. Heterooctamer of four alpha and four beta subunits. It depends on pyruvate as a cofactor. Is synthesized initially as an inactive proenzyme, which is activated by self-cleavage at a specific serine bond to produce a beta-subunit with a hydroxyl group at its C-terminus and an alpha-subunit with a pyruvoyl group at its N-terminus.

Its subcellular location is the cytoplasm. It carries out the reaction L-aspartate + H(+) = beta-alanine + CO2. Its pathway is cofactor biosynthesis; (R)-pantothenate biosynthesis; beta-alanine from L-aspartate: step 1/1. Functionally, catalyzes the pyruvoyl-dependent decarboxylation of aspartate to produce beta-alanine. This is Aspartate 1-decarboxylase from Anaeromyxobacter sp. (strain K).